The sequence spans 108 residues: MIVSTTPTLEGHKIDAYYGIVVGEAVMGANVFKDLFASIRDIVGGRSGSYEEELTTARKLAFTELEHEARSMGANAVVGIDLDYQVIGDKGSMLMVSISGTAVKTSPL.

The protein belongs to the UPF0145 family.

This is UPF0145 protein MADE_1007770 from Alteromonas mediterranea (strain DSM 17117 / CIP 110805 / LMG 28347 / Deep ecotype).